A 430-amino-acid polypeptide reads, in one-letter code: MQTTRIAMEDASFPYRLGTDCAEDVVARLAALEASSYLVVADTTVAELYGAALTAHIDKEAGPSHLLTHEVGEVHKTLATVSALAEQALGRGADRRSVVVALGGGVTGNIAGLMASLLFRGIRLVHVPTTVVAMLDSVLSLKQAVNTTFGKNLAGTFYQPVEVLADTAALRTLPPREIRSGMGEVVKNALAIRPAMLDRLAGALRPDTRYDDETMRWIIAESLAAKADVTSGDKHERRSGLVLEYGHTAGHAIEHASRGAVAHGAGVAVGMTLAAEVSRRLGHADAGLVALHRELVAAAGVEPAVPDHVDTALVKNWLAYDNKRGYLDSPPGHTPMVLLSAPGEVLHTGTMPLVPVPLALLEEVVDESAARGGAGGGAAEPAAARTGPVPDGPEAAVPATPGPVPAGPAAAAPLPSGPAPTAPAAAGPVP.

NAD(+) is bound by residues Asp42, 73–76 (EVHK), 105–109 (GVTGN), 129–130 (TT), 140–142 (SLK), and 151–152 (KN). Residue Lys142 is part of the active site. Glu184 contributes to the Co(2+) binding site. Glu244 is an active-site residue. Positions 247 and 263 each coordinate Co(2+). The disordered stretch occupies residues 371 to 430 (RGGAGGGAAEPAAARTGPVPDGPEAAVPATPGPVPAGPAAAAPLPSGPAPTAPAAAGPVP). The segment covering 379 to 399 (AEPAAARTGPVPDGPEAAVPA) has biased composition (low complexity).

This sequence belongs to the sugar phosphate cyclases superfamily. DOI synthase family. Requires NAD(+) as cofactor. Co(2+) serves as cofactor.

The enzyme catalyses D-glucose 6-phosphate = 2-deoxy-L-scyllo-inosose + phosphate. Its pathway is metabolic intermediate biosynthesis; 2-deoxystreptamine biosynthesis; 2-deoxystreptamine from D-glucose 6-phosphate: step 1/4. It functions in the pathway antibiotic biosynthesis; neomycin biosynthesis. In terms of biological role, catalyzes the intramolecular carbocycle formation from D-glucose-6-phosphate to 2-deoxy-scyllo-inosose (DOI). The protein is 2-deoxy-scyllo-inosose synthase (neoC) of Streptomyces fradiae (Streptomyces roseoflavus).